The sequence spans 176 residues: MEKEGLAKSSDTSIKKEGFISQSLSKDGIPNQSLPDDHIGIENISVEPNKLYEAVSNLRNYGFNYLQCQGGYDEGPGKNLVSFYHFITVDDFQKIEKIKEVRLKVFLKRDSDLSIPSLYKIFKGSDWQERETYDMYGINFIDHPNPTRLLMPEDWRGWPLRKDYIQPDFYELQDAY.

Residues 1 to 32 (MEKEGLAKSSDTSIKKEGFISQSLSKDGIPNQ) are disordered. A compositionally biased stretch (polar residues) spans 20-32 (ISQSLSKDGIPNQ).

This sequence belongs to the complex I 30 kDa subunit family. NDH-1 can be composed of about 15 different subunits; different subcomplexes with different compositions have been identified which probably have different functions.

It localises to the cellular thylakoid membrane. The enzyme catalyses a plastoquinone + NADH + (n+1) H(+)(in) = a plastoquinol + NAD(+) + n H(+)(out). It catalyses the reaction a plastoquinone + NADPH + (n+1) H(+)(in) = a plastoquinol + NADP(+) + n H(+)(out). Its function is as follows. NDH-1 shuttles electrons from an unknown electron donor, via FMN and iron-sulfur (Fe-S) centers, to quinones in the respiratory and/or the photosynthetic chain. The immediate electron acceptor for the enzyme in this species is believed to be plastoquinone. Couples the redox reaction to proton translocation, and thus conserves the redox energy in a proton gradient. Cyanobacterial NDH-1 also plays a role in inorganic carbon-concentration. The sequence is that of NAD(P)H-quinone oxidoreductase subunit J from Prochlorococcus marinus (strain MIT 9215).